Consider the following 348-residue polypeptide: Phosphate acyltransferase (348 aa).

This sequence belongs to the PlsX family. Homodimer. Probably interacts with PlsY.

The protein resides in the cytoplasm. It catalyses the reaction a fatty acyl-[ACP] + phosphate = an acyl phosphate + holo-[ACP]. Its pathway is lipid metabolism; phospholipid metabolism. Functionally, catalyzes the reversible formation of acyl-phosphate (acyl-PO(4)) from acyl-[acyl-carrier-protein] (acyl-ACP). This enzyme utilizes acyl-ACP as fatty acyl donor, but not acyl-CoA. The chain is Phosphate acyltransferase from Francisella tularensis subsp. novicida (strain U112).